We begin with the raw amino-acid sequence, 653 residues long: Epithelial sodium channel subunit gamma (653 aa).

Residues 1-55 (MAPGEKIKAKIKKNLPVKGPQAPTIKELMRWYCLNTNTHGCRRIVVSPGRLRRLL) are Cytoplasmic-facing. The helical transmembrane segment at 56 to 76 (WIAFTLTAVGLIFWQCALLVF) threads the bilayer. Residues 77-538 (SFYTVSVSIK…EMLLSNFGGQ (462 aa)) lie on the Extracellular side of the membrane. Intrachain disulfides connect Cys-100–Cys-287, Cys-211–Cys-218, Cys-264–Cys-271, Cys-376–Cys-461, Cys-398–Cys-457, Cys-402–Cys-453, Cys-411–Cys-438, and Cys-413–Cys-427. The gating release of inhibition by proteolysis (GRIP); protease-sensitive region that is responsible for the proteolytic activation of the channel stretch occupies residues 137 to 225 (RKQRDTESWS…SDCATYTFSS (89 aa)). The N-linked (GlcNAc...) asparagine glycan is linked to Asn-213. Asn-275 carries N-linked (GlcNAc...) asparagine glycosylation. Asn-501 carries N-linked (GlcNAc...) asparagine glycosylation. Residues 539–559 (LGLWMSCSVVCVIEIIEVFFI) traverse the membrane as a helical segment. At 560-653 (DSLSIVTRRQ…LADTRLPDEP (94 aa)) the chain is on the cytoplasmic side. Residues 582–632 (AAPSAEAPSGAQGQENPALEIDDDLPTFTSALSLPPAPGAQVPGTPPPRYN) are disordered. Residues 627–631 (PPPRY) carry the PY motif; recruits WW domain-containing proteins and is thereby required for ubiquitination and inhibition of the channel by NEDD4 and NEDD4L motif.

It belongs to the amiloride-sensitive sodium channel (TC 1.A.6) family. SCNN1G subfamily. As to quaternary structure, component of the heterotrimeric epithelial sodium channel (ENaC) composed of an alpha/SCNN1A, a beta/SCNN1B and a gamma/SCNN1G subunit. Interacts with WWP1 (via WW domains). Interacts with WWP2 (via WW domains); inhibits the channel. Interacts with the full-length immature form of PCSK9 (pro-PCSK9); inhibits ENaC by promoting its proteasomal degradation. Interacts with BPIFA1; the interaction is indirect via SCNN1B and inhibits the proteolytic maturation of SCNN1A and SCNN1G and the activation of ENaC. Phosphorylated on serine and threonine residues. Aldosterone and insulin increase the basal level of phosphorylation. In terms of processing, ubiquitinated. Can be ubiquitinated at multiple sites and undergo monoubiquitination and polyubiquitination. Ubiquitination by NEDD4 or NEDD4L inhibits the ENaC channel through endocytosis, intracellular retention and degradation of its individual subunits. Post-translationally, ENaC is activated through the proteolytic maturation of its subunits. Furin cleaves the SCNN1G subunit first, followed by cleavage by prostasin (PRSS8), which results in a stepwise increase in the open probability of the channel due to the release of an inhibitory tract. BPIFA1, which is recruited by the SCNN1B subunit, prevents the proteolytic activation of ENaC. N-glycosylated. N-linked glycans are processed to complex type during ENaC complex assembly and transport to the plasma membrane.

Its subcellular location is the apical cell membrane. It catalyses the reaction Na(+)(in) = Na(+)(out). With respect to regulation, originally identified and characterized by its inhibition by the diuretic drug amiloride. In terms of biological role, this is one of the three pore-forming subunits of the heterotrimeric epithelial sodium channel (ENaC), a critical regulator of sodium balance and fluid homeostasis. ENaC operates in epithelial tissues, where it mediates the electrodiffusion of sodium ions from extracellular fluid through the apical membrane of cells, with water following osmotically. It plays a key role in maintaining sodium homeostasis through electrogenic sodium reabsorption in the kidneys. Additionally, ENaC is essential for airway surface liquid homeostasis, which is crucial for proper mucus clearance. The protein is Epithelial sodium channel subunit gamma of Oryctolagus cuniculus (Rabbit).